The following is a 116-amino-acid chain: Non-specific lipid-transfer protein 10 (116 aa).

Residues 1 to 22 (MMRVVLPLCLLLASIFAWGSEA) form the signal peptide. 4 disulfides stabilise this stretch: C26-C73, C36-C50, C51-C98, and C71-C112.

Belongs to the plant LTP family.

In terms of biological role, plant non-specific lipid-transfer proteins transfer phospholipids as well as galactolipids across membranes. May play a role in wax or cutin deposition in the cell walls of expanding epidermal cells and certain secretory tissues. The sequence is that of Non-specific lipid-transfer protein 10 (LTP10) from Arabidopsis thaliana (Mouse-ear cress).